Consider the following 1379-residue polypeptide: ATPase histone chaperone YTA7 (1379 aa).

2 disordered regions span residues 1–39 and 54–243; these read MARN…TTTR and DFLE…NSRN. Position 2 is an N-acetylalanine (alanine 2). 2 positions are modified to phosphoserine: serine 11 and serine 17. Over residues 61 to 78 the composition is skewed to basic and acidic residues; the sequence is VMDKDETPVDVTSDEHHN. Phosphoserine is present on serine 94. The segment covering 97 to 110 has biased composition (basic and acidic residues); it reads ENARTNEELTNERN. Acidic residues-rich tracts occupy residues 119-152 and 170-184; these read PEED…DEDS and DPDD…DEEG. Over residues 192-207 the composition is skewed to basic residues; it reads SSKRLKRANSRRTRSS. Threonine 212 is modified (phosphothreonine). Positions 218 to 228 are enriched in basic residues; it reads RALRSRTRHSR. Threonine 229 is modified (phosphothreonine). Serine 241, serine 259, and serine 285 each carry phosphoserine. Residues 302-330 are disordered; the sequence is NPSPARRGRGGWNASQNSGPTRRLFPTGG. A phosphoserine mark is found at serine 367, serine 369, and serine 370. Positions 375-396 are disordered; sequence LPLGVTPKTKKENTQKKKKKKP. Positions 450-578 are AAA-ATPase; required for its chromatin boundary function; it reads VLFHGPPGTG…PALRRPGRFD (129 aa). Position 454–461 (454–461) interacts with ATP; sequence GPPGTGKT. Position 735 is a phosphoserine (serine 735). The Bromo domain occupies 974–1101; it reads RLKNVLKIKL…ANAQMGIEEI (128 aa). Serine 1142 is subject to Phosphoserine. 2 disordered regions span residues 1233-1274 and 1291-1316; these read TCTS…ANTN and LHET…GKKS. The span at 1244–1254 shows a compositional bias: basic and acidic residues; it reads ERARKEPKENE. Serine 1256 is modified (phosphoserine). Residues 1256-1274 are compositionally biased toward polar residues; sequence SLQTQVTEENFSKIDANTN. Over residues 1293-1316 the composition is skewed to basic and acidic residues; it reads ETVEKRERSPIPKEVVEPEQGKKS.

Belongs to the AAA ATPase family. As to quaternary structure, interacts with CSE4/CENP-A. Interacts with SCM3. Interacts with SPT16. Interacts with POB3. Interacts with the casein kinase II complex subunits CKA1, CKA2, CKB1 and CKB2. Interacts with RNA polymerase II. Interacts (via Bromo domain) with histone H3. Interacts (via Bromo domain) with histone H4. Phosphorylated by CDK1 and casein kinase II during S-phase, which leads to its eviction from histone gene promoters and promotes histone gene transcription.

The protein resides in the chromosome. It is found in the centromere. Its subcellular location is the nucleus. Functionally, functions as an ATP-dependent nucleosome disassembly factor that helps evict canonical histone H3 from the 5'-end of genes upon their induction. Also contributes to kinetochore assembly by cooperating with SCM3 to load the histone H3 variant CSE4/CENP-A at centromeres. Provides a chromatin boundary function at the 5'-end of genes that restricts access by RTT106 and thus prevents ectopic spreading of repressive chromatin into coding regions. Also prevents heterochromatin spreading downstream of the silent mating-type locus HMR, this function is independent of the tRNA boundary element. Contributes to appropriate cell cycle regulation of histone gene expression by recruiting RNA polymerase II to histone genes, and subsequent CDK1- and casein kinase II-dependent eviction from chromatin is required to promote transcriptional elongation. In Saccharomyces cerevisiae (strain ATCC 204508 / S288c) (Baker's yeast), this protein is ATPase histone chaperone YTA7.